The primary structure comprises 147 residues: Interleukin-4 (147 aa).

Residues 1–24 form the signal peptide; sequence MGLSPHLAVTLFCFLICTGNGIHG. Cysteine 47 and cysteine 87 are disulfide-bonded. N-linked (GlcNAc...) asparagine glycans are attached at residues asparagine 61, asparagine 90, and asparagine 117.

It belongs to the IL-4/IL-13 family.

The protein resides in the secreted. Participates in at least several B-cell activation processes as well as of other cell types. It is a costimulator of DNA-synthesis. It induces the expression of class II MHC molecules on resting B-cells. It enhances both secretion and cell surface expression of IgE and IgG1. It also regulates the expression of the low affinity Fc receptor for IgE (CD23) on both lymphocytes and monocytes. Positively regulates IL31RA expression in macrophages. Stimulates autophagy in dendritic cells by interfering with mTORC1 signaling and through the induction of RUFY4. This is Interleukin-4 (Il4) from Rattus norvegicus (Rat).